Consider the following 340-residue polypeptide: Delta(1)-pyrroline-2-carboxylate reductase 2 (340 aa).

S50 acts as the Charge relay system in catalysis. The Proton donor role is filled by H51. Position 55 (R55) interacts with substrate. 123–127 contacts NADP(+); sequence HFSAL. Residue T163 participates in substrate binding. 181–183 contributes to the NADP(+) binding site; sequence DFA. 189 to 190 contributes to the substrate binding site; sequence RG. The Charge relay system role is filled by D191. Residues 232-233 and 307-313 contribute to the NADP(+) site; these read HK and RLPSQRR.

This sequence belongs to the LDH2/MDH2 oxidoreductase family. In terms of assembly, homodimer.

It catalyses the reaction L-proline + NAD(+) = 1-pyrroline-2-carboxylate + NADH + H(+). The catalysed reaction is L-proline + NADP(+) = 1-pyrroline-2-carboxylate + NADPH + H(+). Functionally, catalyzes the reduction of Delta(1)-pyrroline-2-carboxylate (Pyr2C) to L-proline, using NADPH as the electron donor. May be involved in a degradation pathway that converts trans-3-hydroxy-L-proline (t3LHyp) to L-proline. In Burkholderia multivorans (strain ATCC 17616 / 249), this protein is Delta(1)-pyrroline-2-carboxylate reductase 2.